Here is a 37-residue protein sequence, read N- to C-terminus: SLVCDLECSAEVTTCCETGTCHGITTYNCVGGTEPET.

3 disulfide bridges follow: cysteine 4/cysteine 16, cysteine 8/cysteine 21, and cysteine 15/cysteine 29.

Expressed by the venom duct.

The protein resides in the secreted. Acts as a neurotoxin by inhibiting an ion channel. This is Turripeptide Lol6.2 from Iotyrris olangoensis (Sea snail).